The following is a 182-amino-acid chain: Molybdopterin synthase catalytic subunit (182 aa).

Residues 119–120 (HR), lysine 135, and 142–144 (KRE) contribute to the substrate site. Positions 152 to 182 (VWRANRDGAPGQRIDTAEPAVGAGSGGEIDD) are disordered.

Belongs to the MoaE family. MOCS2B subfamily. As to quaternary structure, heterotetramer; composed of 2 small (MOCS2A) and 2 large (MOCS2B) subunits.

It localises to the cytoplasm. It catalyses the reaction 2 [molybdopterin-synthase sulfur-carrier protein]-C-terminal-Gly-aminoethanethioate + cyclic pyranopterin phosphate + H2O = molybdopterin + 2 [molybdopterin-synthase sulfur-carrier protein]-C-terminal Gly-Gly + 2 H(+). The protein operates within cofactor biosynthesis; molybdopterin biosynthesis. Functionally, catalytic subunit of the molybdopterin synthase complex, a complex that catalyzes the conversion of precursor Z into molybdopterin. Acts by mediating the incorporation of 2 sulfur atoms from thiocarboxylated MOCS2A into precursor Z to generate a dithiolene group. The sequence is that of Molybdopterin synthase catalytic subunit from Pyricularia oryzae (strain 70-15 / ATCC MYA-4617 / FGSC 8958) (Rice blast fungus).